The chain runs to 302 residues: Ribosomal RNA small subunit methyltransferase H (302 aa).

S-adenosyl-L-methionine contacts are provided by residues Gly-36–His-38, Asp-56, Phe-84, Asp-99, and Gln-106.

The protein belongs to the methyltransferase superfamily. RsmH family.

The protein localises to the cytoplasm. It catalyses the reaction cytidine(1402) in 16S rRNA + S-adenosyl-L-methionine = N(4)-methylcytidine(1402) in 16S rRNA + S-adenosyl-L-homocysteine + H(+). Specifically methylates the N4 position of cytidine in position 1402 (C1402) of 16S rRNA. The protein is Ribosomal RNA small subunit methyltransferase H of Flavobacterium johnsoniae (strain ATCC 17061 / DSM 2064 / JCM 8514 / BCRC 14874 / CCUG 350202 / NBRC 14942 / NCIMB 11054 / UW101) (Cytophaga johnsonae).